A 75-amino-acid chain; its full sequence is Small ribosomal subunit protein bS18 (75 aa).

The protein belongs to the bacterial ribosomal protein bS18 family. In terms of assembly, part of the 30S ribosomal subunit. Forms a tight heterodimer with protein bS6.

Functionally, binds as a heterodimer with protein bS6 to the central domain of the 16S rRNA, where it helps stabilize the platform of the 30S subunit. The chain is Small ribosomal subunit protein bS18 from Teredinibacter turnerae (strain ATCC 39867 / T7901).